The primary structure comprises 548 residues: Chaperonin GroEL (548 aa).

Residues 30–33 (TLGP), Lys-51, 87–91 (DGTTT), Gly-415, 479–481 (NAA), and Asp-495 contribute to the ATP site.

The protein belongs to the chaperonin (HSP60) family. Forms a cylinder of 14 subunits composed of two heptameric rings stacked back-to-back. Interacts with the co-chaperonin GroES.

Its subcellular location is the cytoplasm. The enzyme catalyses ATP + H2O + a folded polypeptide = ADP + phosphate + an unfolded polypeptide.. Functionally, together with its co-chaperonin GroES, plays an essential role in assisting protein folding. The GroEL-GroES system forms a nano-cage that allows encapsulation of the non-native substrate proteins and provides a physical environment optimized to promote and accelerate protein folding. The chain is Chaperonin GroEL from Klebsiella aerogenes (strain ATCC 13048 / DSM 30053 / CCUG 1429 / JCM 1235 / KCTC 2190 / NBRC 13534 / NCIMB 10102 / NCTC 10006 / CDC 819-56) (Enterobacter aerogenes).